The primary structure comprises 174 residues: MTYTLLLLSVILVVGFVGFSSKPSPIYGGLVLVVSGVVGCAVILNCGGGYLGLMVFLIYLGGMMVVFGYTTAMAIEEYPEAWGSGVEVLVGVLVGFVMEVALVLWAKEYDGLVMVLNFDNMGSWVIYEGEGSGLIREDSIGAGALYDYGRWLVVVTGWTLLVGVYIVIEIARGN.

Transmembrane regions (helical) follow at residues 1 to 21, 24 to 44, 47 to 67, 86 to 106, and 151 to 171; these read MTYT…GFSS, SPIY…AVIL, GGGY…MVVF, VEVL…VLWA, and WLVV…IEIA.

The protein belongs to the complex I subunit 6 family. Core subunit of respiratory chain NADH dehydrogenase (Complex I) which is composed of 45 different subunits.

It is found in the mitochondrion inner membrane. It carries out the reaction a ubiquinone + NADH + 5 H(+)(in) = a ubiquinol + NAD(+) + 4 H(+)(out). Core subunit of the mitochondrial membrane respiratory chain NADH dehydrogenase (Complex I) which catalyzes electron transfer from NADH through the respiratory chain, using ubiquinone as an electron acceptor. Essential for the catalytic activity and assembly of complex I. The sequence is that of NADH-ubiquinone oxidoreductase chain 6 (MT-ND6) from Hylobates lar (Lar gibbon).